Consider the following 337-residue polypeptide: G-protein coupled receptor 26 (337 aa).

Residues 1–10 (MNSWDAGLAG) lie on the Extracellular side of the membrane. Residues 11–31 (LLVGTMGVSLLSNALVLLCLL) form a helical membrane-spanning segment. The Cytoplasmic segment spans residues 32–47 (HSADIRRQAPALFTLN). The helical transmembrane segment at 48-68 (LTCGNLLCTVVNMPLTLAGVV) threads the bilayer. Residues 69–81 (AQRQPAGDRLCRL) are Extracellular-facing. A disulfide bond links Cys-79 and Cys-156. The helical transmembrane segment at 82–102 (AAFLDTFLAANSMLSMAALSI) threads the bilayer. Residues 103 to 123 (DRWVAVVFPLSYRAKMRLRDA) are Cytoplasmic-facing. A helical transmembrane segment spans residues 124-144 (ALMVAYTWLHALTFPAAALAL). Residues 145–168 (SWLGFHQLYASCTLCSRRPDERLR) are Extracellular-facing. A helical transmembrane segment spans residues 169–189 (FAVFTGAFHALSFLLSFVVLC). Topologically, residues 190–245 (CTYLKVLKVARFHCKRIDVITMQTLVLLVDLHPSVRERCLEEQKRRRQRATKKIST) are cytoplasmic. Residues 246 to 266 (FIGTFLVCFAPYVITRLVELF) traverse the membrane as a helical segment. Over 267–276 (STVPIGSHWG) the chain is Extracellular. Residues 277-297 (VLSKCLAYSKAASDPFVYSLL) form a helical membrane-spanning segment. The Cytoplasmic segment spans residues 298-337 (RHQYRKSCKEILNRLLHRRSIHSSGLTGDSHSQNILPVSE).

This sequence belongs to the G-protein coupled receptor 1 family. In terms of tissue distribution, highly expressed in the CNS, the highest expression is seen in the amygdala, hippocampus and thalamus. Weak expression is detected in testis. Down-regulated in glioblastoma.

The protein resides in the cell membrane. In terms of biological role, orphan receptor. Displays a significant level of constitutive activity. Its effect is mediated by G(s)-alpha protein that stimulate adenylate cyclase, resulting in an elevation of intracellular cAMP. In Homo sapiens (Human), this protein is G-protein coupled receptor 26 (GPR26).